The chain runs to 791 residues: Ataxin-2 homolog (791 aa).

Residues 1–22 are compositionally biased toward polar residues; that stretch reads MATRSVSMKQTSQRAASPNKTQ. Disordered stretches follow at residues 1–28, 60–100, 112–134, 235–311, 326–423, 452–505, 613–634, and 707–791; these read MATR…KKWS, RGGV…QQRV, RTET…GVPL, TRSN…KEGQ, SLDS…TKLG, KPAP…PVSS, NPSQ…GNSS, and PMYG…EAKP. Residues 76–96 are compositionally biased toward low complexity; sequence SLASSEENVSSVSGSAKSNNS. Basic and acidic residues-rich tracts occupy residues 112-125 and 243-256; these read RTET…RWMP and NNKD…EAPH. Over residues 326–337 the composition is skewed to polar residues; the sequence is SLDSKQPSSTKS. Composition is skewed to basic and acidic residues over residues 360-371 and 395-418; these read DSKEPRKEEAEK and SKEE…KETT. The segment covering 473 to 486 has biased composition (low complexity); it reads SIPSTTPQSPSVVS. The segment covering 487–497 has biased composition (polar residues); it reads NGENKPSSSPV. Low complexity-rich tracts occupy residues 715 to 725 and 734 to 760; these read SNSQRSFNSSN and NNNA…NTTA. The span at 774-791 shows a compositional bias: basic and acidic residues; the sequence is DATEKTEKDASANQEAKP.

The protein belongs to the ataxin-2 family. In terms of assembly, interacts with mkt1.

It localises to the cytoplasm. Involved in post-transcriptional regulation of gene expression, probably by association with mkt1. This chain is Ataxin-2 homolog, found in Schizosaccharomyces pombe (strain 972 / ATCC 24843) (Fission yeast).